The following is a 465-amino-acid chain: Crh-like protein ARB_05253 (465 aa).

A signal peptide spans 1 to 21; that stretch reads MKLSLAAALLGALAVSAQTST. The region spanning 22–223 is the GH16 domain; it reads ECNPLKQKCP…WAGGETDFSK (202 aa). Residues cysteine 23 and cysteine 30 are joined by a disulfide bond. The active-site Nucleophile is glutamate 114. Glutamate 118 serves as the catalytic Proton donor. The chitin site is built by glutamate 118, tryptophan 200, and threonine 211. 2 disordered regions span residues 261–325 and 339–442; these read GQVN…STMT and TGTG…PGST. Asparagine 264 carries an N-linked (GlcNAc...) asparagine glycan. A compositionally biased stretch (low complexity) spans 277–287; the sequence is SSTLPSSPSTS. The span at 304 to 325 shows a compositional bias: polar residues; that stretch reads QAPNTGSSPSNTLTNGPSSTMT. Composition is skewed to low complexity over residues 339–348, 361–376, and 383–397; these read TGTGGVVTPT, TSRS…SASS, and MTTS…TGTG. Serine 441 is lipidated: GPI-anchor amidated serine. Positions 442–465 are cleaved as a propeptide — removed in mature form; that stretch reads TGAIHSVSNALLLSFCAIAAWALV.

This sequence belongs to the glycosyl hydrolase 16 family. CRH1 subfamily. In terms of processing, the GPI-anchor is attached to the protein in the endoplasmic reticulum and serves to target the protein to the cell surface. There, the glucosamine-inositol phospholipid moiety is cleaved off and the GPI-modified mannoprotein is covalently attached via its lipidless GPI glycan remnant to the 1,6-beta-glucan of the outer cell wall layer.

It is found in the secreted. Its subcellular location is the cell wall. The protein localises to the membrane. The enzyme catalyses Random endo-hydrolysis of N-acetyl-beta-D-glucosaminide (1-&gt;4)-beta-linkages in chitin and chitodextrins.. Dual chitinase/transglycosylase that plays a role in cell wall architecture. Chitinase and transglycosylase activities are coupled. Required for the polysaccharide cross-linking at the septa and the cell wall. More specifically, transfers chitin to 1,6-beta-glucan in the cell wall. The polypeptide is Crh-like protein ARB_05253 (Arthroderma benhamiae (strain ATCC MYA-4681 / CBS 112371) (Trichophyton mentagrophytes)).